A 324-amino-acid polypeptide reads, in one-letter code: Methionyl-tRNA formyltransferase (324 aa).

Residue 109–112 (SLLP) coordinates (6S)-5,6,7,8-tetrahydrofolate. Positions 305 to 324 (LHPGESFHKATQDNQGASET) are disordered.

Belongs to the Fmt family.

It carries out the reaction L-methionyl-tRNA(fMet) + (6R)-10-formyltetrahydrofolate = N-formyl-L-methionyl-tRNA(fMet) + (6S)-5,6,7,8-tetrahydrofolate + H(+). Its function is as follows. Attaches a formyl group to the free amino group of methionyl-tRNA(fMet). The formyl group appears to play a dual role in the initiator identity of N-formylmethionyl-tRNA by promoting its recognition by IF2 and preventing the misappropriation of this tRNA by the elongation apparatus. The protein is Methionyl-tRNA formyltransferase of Nitrosomonas europaea (strain ATCC 19718 / CIP 103999 / KCTC 2705 / NBRC 14298).